A 186-amino-acid polypeptide reads, in one-letter code: Mitoferrin-2B (186 aa).

Residues 75–163 (SNVTAHMLAG…FACYEKLKKT (89 aa)) form a Solcar repeat. Transmembrane regions (helical) follow at residues 77-96 (VTAHMLAGAVAGVMEHCLMY), 137-157 (RGLNVTATGAGPAHALYFACY), and 172-185 (GNCHVANGIDNSCP).

This sequence belongs to the mitochondrial carrier (TC 2.A.29) family.

The protein localises to the mitochondrion inner membrane. It catalyses the reaction Fe(2+)(in) = Fe(2+)(out). Mitochondrial iron transporter that mediates iron uptake. Probably required for heme synthesis of hemoproteins and Fe-S cluster assembly in non-erythroid cells. This is Mitoferrin-2B (slc25a28-b) from Xenopus laevis (African clawed frog).